The following is a 105-amino-acid chain: uncharacterized protein (105 aa).

Residues 14 to 104 (HYITACLKII…VEWLMKSNVN (91 aa)) form the ABM domain.

This is an uncharacterized protein from Bacillus subtilis (strain 168).